Reading from the N-terminus, the 600-residue chain is Sulfite reductase [NADPH] flavoprotein alpha-component (600 aa).

A Flavodoxin-like domain is found at isoleucine 63–threonine 201. FMN contacts are provided by residues serine 69 to alanine 74, serine 116 to glycine 119, and leucine 152 to cysteine 161. The FAD-binding FR-type domain occupies glutamine 235–proline 449. FAD-binding positions include threonine 323, histidine 357, arginine 387–serine 390, threonine 405–glycine 407, tyrosine 411, and glycine 420–serine 423. NADP(+) is bound by residues serine 520–arginine 521, lysine 526–glutamine 530, and aspartate 562. Tyrosine 600 provides a ligand contact to FAD.

It belongs to the NADPH-dependent sulphite reductase flavoprotein subunit CysJ family. In the N-terminal section; belongs to the flavodoxin family. The protein in the C-terminal section; belongs to the flavoprotein pyridine nucleotide cytochrome reductase family. Alpha(8)-beta(8). The alpha component is a flavoprotein, the beta component is a hemoprotein. Requires FAD as cofactor. FMN is required as a cofactor.

It catalyses the reaction hydrogen sulfide + 3 NADP(+) + 3 H2O = sulfite + 3 NADPH + 4 H(+). Its pathway is sulfur metabolism; hydrogen sulfide biosynthesis; hydrogen sulfide from sulfite (NADPH route): step 1/1. Functionally, component of the sulfite reductase complex that catalyzes the 6-electron reduction of sulfite to sulfide. This is one of several activities required for the biosynthesis of L-cysteine from sulfate. The flavoprotein component catalyzes the electron flow from NADPH -&gt; FAD -&gt; FMN to the hemoprotein component. The protein is Sulfite reductase [NADPH] flavoprotein alpha-component of Photorhabdus laumondii subsp. laumondii (strain DSM 15139 / CIP 105565 / TT01) (Photorhabdus luminescens subsp. laumondii).